Here is a 147-residue protein sequence, read N- to C-terminus: Hemoglobin subunit gamma (147 aa).

Residues 3-147 enclose the Globin domain; it reads NFTAEDKAAI…VASALASRYH (145 aa). Residues H64 and H93 each contribute to the heme b site.

The protein belongs to the globin family. As to quaternary structure, heterotetramer of two alpha chains and two gamma chains in fetal hemoglobin (Hb F). In terms of tissue distribution, red blood cells.

Gamma chains make up the fetal hemoglobin F, in combination with alpha chains. The protein is Hemoglobin subunit gamma (HBG) of Lagothrix lagotricha (Brown woolly monkey).